The sequence spans 641 residues: Sodium-dependent nutrient amino acid transporter 1 (641 aa).

Residues 1–21 show a composition bias toward polar residues; that stretch reads MELKNIEQQPQLQNGNGTATE. The disordered stretch occupies residues 1–37; that stretch reads MELKNIEQQPQLQNGNGTATENNEKGEQKPTEGGERT. Residues 1 to 38 are Cytoplasmic-facing; sequence MELKNIEQQPQLQNGNGTATENNEKGEQKPTEGGERTN. Basic and acidic residues predominate over residues 22 to 35; that stretch reads NNEKGEQKPTEGGE. The next 3 membrane-spanning stretches (helical) occupy residues 39-59, 72-92, and 125-145; these read WGNG…LGNV, GAFL…MYYL, and TVCI…YLFV. Residues N181, N190, and N198 are each glycosylated (N-linked (GlcNAc...) asparagine). 9 consecutive transmembrane segments (helical) span residues 229–249, 258–278, 307–327, 341–361, 401–421, 441–461, 474–494, 516–536, and 552–572; these read PDWK…LVIM, AAYF…GRAV, AVVQ…MFAS, IVTT…FAIL, LFSV…IVAL, VALV…TPGG, TYVV…IYGL, CWSF…MATI, and IAGW…GIWY.

It belongs to the sodium:neurotransmitter symporter (SNF) (TC 2.A.22) family.

The protein localises to the membrane. Unusual broad substrate spectrum amino acid:sodium cotransporter that promotes absorption of the D isomers of essential amino acids. Neutral amino acids are the preferred substrates, especially methionine and phenylalanine. The polypeptide is Sodium-dependent nutrient amino acid transporter 1 (Drosophila willistoni (Fruit fly)).